We begin with the raw amino-acid sequence, 206 residues long: FMN-dependent NADH:quinone oxidoreductase (206 aa).

Residues S10 and 15 to 17 (SVS) contribute to the FMN site.

It belongs to the azoreductase type 1 family. Homodimer. FMN is required as a cofactor.

The catalysed reaction is 2 a quinone + NADH + H(+) = 2 a 1,4-benzosemiquinone + NAD(+). It catalyses the reaction N,N-dimethyl-1,4-phenylenediamine + anthranilate + 2 NAD(+) = 2-(4-dimethylaminophenyl)diazenylbenzoate + 2 NADH + 2 H(+). Its function is as follows. Quinone reductase that provides resistance to thiol-specific stress caused by electrophilic quinones. Also exhibits azoreductase activity. Catalyzes the reductive cleavage of the azo bond in aromatic azo compounds to the corresponding amines. This is FMN-dependent NADH:quinone oxidoreductase from Acidobacterium capsulatum (strain ATCC 51196 / DSM 11244 / BCRC 80197 / JCM 7670 / NBRC 15755 / NCIMB 13165 / 161).